Here is a 231-residue protein sequence, read N- to C-terminus: Ribose-5-phosphate isomerase A (231 aa).

Residues 32–35, 85–88, and 98–101 contribute to the substrate site; these read TGST, DGAD, and KGGG. Glu-107 serves as the catalytic Proton acceptor. Lys-125 lines the substrate pocket.

Belongs to the ribose 5-phosphate isomerase family. As to quaternary structure, homodimer.

The catalysed reaction is aldehydo-D-ribose 5-phosphate = D-ribulose 5-phosphate. The protein operates within carbohydrate degradation; pentose phosphate pathway; D-ribose 5-phosphate from D-ribulose 5-phosphate (non-oxidative stage): step 1/1. In terms of biological role, catalyzes the reversible conversion of ribose-5-phosphate to ribulose 5-phosphate. This chain is Ribose-5-phosphate isomerase A, found in Burkholderia mallei (strain NCTC 10247).